A 629-amino-acid chain; its full sequence is DNA mismatch repair protein MutL (629 aa).

The protein belongs to the DNA mismatch repair MutL/HexB family.

Its function is as follows. This protein is involved in the repair of mismatches in DNA. It is required for dam-dependent methyl-directed DNA mismatch repair. May act as a 'molecular matchmaker', a protein that promotes the formation of a stable complex between two or more DNA-binding proteins in an ATP-dependent manner without itself being part of a final effector complex. This Rhodospirillum rubrum (strain ATCC 11170 / ATH 1.1.1 / DSM 467 / LMG 4362 / NCIMB 8255 / S1) protein is DNA mismatch repair protein MutL.